Here is a 322-residue protein sequence, read N- to C-terminus: Olfactory receptor 5P2 (322 aa).

The Extracellular segment spans residues Met-1–Val-28. Asn-8 carries an N-linked (GlcNAc...) asparagine glycan. A helical membrane pass occupies residues Ile-29–Ile-42. At Ile-43–Gln-50 the chain is on the cytoplasmic side. A helical membrane pass occupies residues Leu-51–Ser-71. The Extracellular portion of the chain corresponds to Ser-72–Ile-95. A disulfide bridge links Cys-93 with Cys-185. Residues Gln-96 to Tyr-116 traverse the membrane as a helical segment. Topologically, residues Asp-117 to Gln-135 are cytoplasmic. A helical membrane pass occupies residues Val-136–Thr-156. The Extracellular portion of the chain corresponds to Thr-157–Thr-192. Residues Val-193 to Cys-213 traverse the membrane as a helical segment. The Cytoplasmic segment spans residues Tyr-214–Ala-233. The chain crosses the membrane as a helical span at residues Phe-234–Ile-254. Topologically, residues Tyr-255–Asn-267 are extracellular. An N-linked (GlcNAc...) asparagine glycan is attached at Asn-259. The helical transmembrane segment at Lys-268–Leu-288 threads the bilayer. Topologically, residues Arg-289–Thr-322 are cytoplasmic.

This sequence belongs to the G-protein coupled receptor 1 family. As to expression, expressed in the tongue.

The protein resides in the cell membrane. Odorant receptor (Potential). May be involved in taste perception. This chain is Olfactory receptor 5P2 (OR5P2), found in Homo sapiens (Human).